The primary structure comprises 139 residues: Exodeoxyribonuclease 7 small subunit (139 aa).

2 disordered regions span residues M1–F26 and D82–E139. The segment covering A130–E139 has biased composition (acidic residues).

It belongs to the XseB family. In terms of assembly, heterooligomer composed of large and small subunits.

Its subcellular location is the cytoplasm. The catalysed reaction is Exonucleolytic cleavage in either 5'- to 3'- or 3'- to 5'-direction to yield nucleoside 5'-phosphates.. Its function is as follows. Bidirectionally degrades single-stranded DNA into large acid-insoluble oligonucleotides, which are then degraded further into small acid-soluble oligonucleotides. This chain is Exodeoxyribonuclease 7 small subunit, found in Rhodopirellula baltica (strain DSM 10527 / NCIMB 13988 / SH1).